The following is an 89-amino-acid chain: Gamma-bungarotoxin (89 aa).

The first 21 residues, 1–21, serve as a signal peptide directing secretion; the sequence is MKTLLLTLVVVTIVCLDLGYT. Cystine bridges form between Cys-24/Cys-45, Cys-27/Cys-32, Cys-38/Cys-66, Cys-70/Cys-81, and Cys-82/Cys-87. The Cell attachment site motif lies at 54-56; sequence RGD.

The protein belongs to the three-finger toxin family. Ancestral subfamily. Orphan group V sub-subfamily. Expressed by the venom gland.

It is found in the secreted. Exhibits M2 muscarinic acetylcholine receptor (CHRM2)-blocking activity, but has a weak binding activity toward nicotinic AChR. Moreover, it inhibits collagen-induced platelet aggregation. In Bungarus multicinctus (Many-banded krait), this protein is Gamma-bungarotoxin.